The sequence spans 228 residues: MANHSQLGFQDASSPIMEELVEFHDHALIVALAICSLVLYLLAHMLMEKLSSNAVDAQEVELIWTILPAIVLVLLALPSLQILYMMDEIDEPDLTLKAIGHQWYWSYEYTDFKDLSFDSYMIPTTDLPNGHFRLLEVDHRVVVPMESPIRVIITAGDVLHSWAVPTLGVKTDAIPGRLNQTSFITTRPGIFYGQCSEICGANHSYMPIVVESTPLPYFEAWSSLLSSS.

The Mitochondrial intermembrane segment spans residues 1–14; it reads MANHSQLGFQDASS. Residues 15–45 form a helical membrane-spanning segment; the sequence is PIMEELVEFHDHALIVALAICSLVLYLLAHM. Residues 46–58 are Mitochondrial matrix-facing; that stretch reads LMEKLSSNAVDAQ. The chain crosses the membrane as a helical span at residues 59 to 86; that stretch reads EVELIWTILPAIVLVLLALPSLQILYMM. Residues 87–228 are Mitochondrial intermembrane-facing; sequence DEIDEPDLTL…EAWSSLLSSS (142 aa). Histidine 160, cysteine 195, glutamate 197, cysteine 199, histidine 203, and methionine 206 together coordinate Cu cation. Glutamate 197 lines the Mg(2+) pocket.

It belongs to the cytochrome c oxidase subunit 2 family. In terms of assembly, component of the cytochrome c oxidase (complex IV, CIV), a multisubunit enzyme composed of 14 subunits. The complex is composed of a catalytic core of 3 subunits MT-CO1, MT-CO2 and MT-CO3, encoded in the mitochondrial DNA, and 11 supernumerary subunits COX4I, COX5A, COX5B, COX6A, COX6B, COX6C, COX7A, COX7B, COX7C, COX8 and NDUFA4, which are encoded in the nuclear genome. The complex exists as a monomer or a dimer and forms supercomplexes (SCs) in the inner mitochondrial membrane with NADH-ubiquinone oxidoreductase (complex I, CI) and ubiquinol-cytochrome c oxidoreductase (cytochrome b-c1 complex, complex III, CIII), resulting in different assemblies (supercomplex SCI(1)III(2)IV(1) and megacomplex MCI(2)III(2)IV(2)). Found in a complex with TMEM177, COA6, COX18, COX20, SCO1 and SCO2. Interacts with TMEM177 in a COX20-dependent manner. Interacts with COX20. Interacts with COX16. The cofactor is Cu cation.

It is found in the mitochondrion inner membrane. It catalyses the reaction 4 Fe(II)-[cytochrome c] + O2 + 8 H(+)(in) = 4 Fe(III)-[cytochrome c] + 2 H2O + 4 H(+)(out). Functionally, component of the cytochrome c oxidase, the last enzyme in the mitochondrial electron transport chain which drives oxidative phosphorylation. The respiratory chain contains 3 multisubunit complexes succinate dehydrogenase (complex II, CII), ubiquinol-cytochrome c oxidoreductase (cytochrome b-c1 complex, complex III, CIII) and cytochrome c oxidase (complex IV, CIV), that cooperate to transfer electrons derived from NADH and succinate to molecular oxygen, creating an electrochemical gradient over the inner membrane that drives transmembrane transport and the ATP synthase. Cytochrome c oxidase is the component of the respiratory chain that catalyzes the reduction of oxygen to water. Electrons originating from reduced cytochrome c in the intermembrane space (IMS) are transferred via the dinuclear copper A center (CU(A)) of subunit 2 and heme A of subunit 1 to the active site in subunit 1, a binuclear center (BNC) formed by heme A3 and copper B (CU(B)). The BNC reduces molecular oxygen to 2 water molecules using 4 electrons from cytochrome c in the IMS and 4 protons from the mitochondrial matrix. This is Cytochrome c oxidase subunit 2 (MT-CO2) from Anas platyrhynchos (Mallard).